The sequence spans 200 residues: MARYTGPSWKVSRRLGISLSGTGKELERRPYAPGQHGPTQRKKISEYGLQQAEKQKLRHMYGLTERQFKNTFNKAGKLQGKHGENFMILLEQRLDNIVYRLGLARTRRAARQLVNHGHITVDGKRVDIPSYQVSVGQVISVREKSAKNSAIAESLDVSSFVPEYVTFDAETLTGSLNRIPERSELAAEINEAFIVEFYSR.

Residues 22 to 43 (TGKELERRPYAPGQHGPTQRKK) are disordered. The region spanning 92 to 170 (QRLDNIVYRL…VPEYVTFDAE (79 aa)) is the S4 RNA-binding domain.

It belongs to the universal ribosomal protein uS4 family. In terms of assembly, part of the 30S ribosomal subunit. Contacts protein S5. The interaction surface between S4 and S5 is involved in control of translational fidelity.

In terms of biological role, one of the primary rRNA binding proteins, it binds directly to 16S rRNA where it nucleates assembly of the body of the 30S subunit. Its function is as follows. With S5 and S12 plays an important role in translational accuracy. The chain is Small ribosomal subunit protein uS4 from Listeria welshimeri serovar 6b (strain ATCC 35897 / DSM 20650 / CCUG 15529 / CIP 8149 / NCTC 11857 / SLCC 5334 / V8).